The primary structure comprises 196 residues: Transmembrane 4 L6 family member 5 (196 aa).

The Cytoplasmic segment spans residues Met-1–Phe-9. Residues Val-10–Val-30 traverse the membrane as a helical segment. Over Pro-31–Gln-45 the chain is Extracellular. The helical transmembrane segment at Val-46–Ala-66 threads the bilayer. The Cytoplasmic portion of the chain corresponds to Val-67–Ser-89. Residues Val-90–Gly-110 form a helical membrane-spanning segment. The interaction with MTOR and CASTOR1 stretch occupies residues Val-90 to Gln-196. Over Leu-111–Thr-156 the chain is Extracellular. Residue Asn-120 is glycosylated (N-linked (GlcNAc...) asparagine). Trp-123–Gln-128 contributes to the L-arginine binding site. Asn-137 and Asn-154 each carry an N-linked (GlcNAc...) asparagine glycan. Residues Leu-157 to Val-177 form a helical membrane-spanning segment. Residues Asn-178–Gln-196 lie on the Cytoplasmic side of the membrane.

The protein belongs to the L6 tetraspanin family. Interacts with MTOR; the interaction is positively regulated by arginine and is negatively regulated by leucine. Interacts with SLC38A9. Interacts with SLC7A1; the interaction is negatively regulated by arginine. Interacts with CASTOR1; the interaction is positively regulated by leucine and is negatively regulated by arginine.

It is found in the lysosome membrane. Its subcellular location is the cell membrane. In terms of biological role, acts as a lysosomal membrane arginine sensor. Forms a complex with MTOR and SLC38A9 on lysosomal membranes in an arginine-regulated manner, leading to arginine efflux which enables the activation of mTORC1 which subsequently leads to RPS6KB1 and EIF4EBP1 phosphorylations. Facilitates cell cycle G1/S phase progression and the translocation of the CDK4-CCND1 complex into the nucleus. CDKN1B and RHOA/ROCK signaling activity are involved in TM4SF5-mediated acceleration of G1/S phase progression. This chain is Transmembrane 4 L6 family member 5 (TM4SF5), found in Bos taurus (Bovine).